Consider the following 328-residue polypeptide: Isopenicillin N synthase (328 aa).

Isopenicillin N-binding residues include Arg-85, Tyr-89, Ser-181, and Tyr-187. N-[(5S)-5-amino-5-carboxypentanoyl]-L-cysteinyl-D-valine contacts are provided by Arg-85, Tyr-89, Ser-181, Tyr-187, His-210, and Asp-212. Positions 178–284 constitute a Fe2OG dioxygenase domain; it reads TLSSVSLIRY…RLSLPFFFHA (107 aa). Residues His-210, Asp-212, and His-266 each contribute to the Fe(2+) site. Residue Arg-275 coordinates 2-oxoglutarate. Ser-277 contacts isopenicillin N. Ser-277 contacts N-[(5S)-5-amino-5-carboxypentanoyl]-L-cysteinyl-D-valine.

It belongs to the iron/ascorbate-dependent oxidoreductase family. The cofactor is Fe cation. Requires L-ascorbate as cofactor.

The enzyme catalyses N-[(5S)-5-amino-5-carboxypentanoyl]-L-cysteinyl-D-valine + O2 = isopenicillin N + 2 H2O. It functions in the pathway antibiotic biosynthesis; penicillin G biosynthesis; penicillin G from L-alpha-aminoadipate and L-cysteine and L-valine: step 2/3. Functionally, removes, in the presence of oxygen, 4 hydrogen atoms from delta-L-(alpha-aminoadipyl)-L-cysteinyl-D-valine (ACV) to form the azetidinone and thiazolidine rings of isopenicillin. In Amycolatopsis lactamdurans (Nocardia lactamdurans), this protein is Isopenicillin N synthase (pcbC).